Consider the following 35-residue polypeptide: Natriuretic peptide TNPa (35 aa).

Cysteines 9 and 25 form a disulfide.

Expressed by the venom gland.

The protein resides in the secreted. Snake venom natriuretic peptide that exhibits vasoactive and probable hypotensive activity. Is only weakly active on natriuretic peptide receptor-C (NPR3). Stimulates cGMP production through the natriuretic peptide receptor 1 (NPR1) with moderate potencies for the rat NPR1 (EC(50)=2020 nM), and very weak potencies over human NPR1 (15% activation at 10 uM). In vivo, does not impact systolic and diastolic blood pressure, as well as heart rate, when intravenously injected in conscious rabbits. Does not affect the bradycardia due to cardiac afferent stimulation (Bezold-Jarisch reflex). This is Natriuretic peptide TNPa from Oxyuranus microlepidotus (Inland taipan).